The following is a 1034-amino-acid chain: Protein ITPRID1 (1034 aa).

3 disordered regions span residues 223-290 (KTQQ…PTKP), 442-486 (QVSS…KSMT), and 624-678 (QSSL…SSWS). Composition is skewed to polar residues over residues 443–453 (VSSMTGSQSPT) and 465–476 (HSPASQQDSLQE). Residues 477–486 (SYGSKSKSMT) show a composition bias toward low complexity. The segment covering 669-678 (TDSNAASSWS) has biased composition (polar residues). Residues 843-902 (EMETMKMVCQSFREHLEEIEQHFMGQQALYPRDMSEEEREEAEYLRTLREALRQQVAELA) adopt a coiled-coil conformation.

This chain is Protein ITPRID1 (Itprid1), found in Mus musculus (Mouse).